A 185-amino-acid polypeptide reads, in one-letter code: MELQDKLLIAMPNLQDSYFSQSVIYICEHNEQGAMGLVLNQVTDLSIAELVAKLNFMMADGRHYPETYVFAGGPVSMDRGFILHTATERTFEHSYRVTDNLQLTTSEDVIETFGTPEAPEKYLVALGCATWTSGQLEKEIADNDWLVVPANNHILFDVPWAECWTAAQQLLGFQPANLVAEAGYC.

The protein belongs to the UPF0301 (AlgH) family.

The polypeptide is UPF0301 protein MS0260 (Mannheimia succiniciproducens (strain KCTC 0769BP / MBEL55E)).